Reading from the N-terminus, the 136-residue chain is Photosystem II extrinsic protein U (136 aa).

The N-terminal stretch at 1-28 (MKQLAQRLFSLALVLALVLGISVQSAQA) is a signal peptide.

The protein belongs to the PsbU family. PSII is composed of 1 copy each of membrane proteins PsbA, PsbB, PsbC, PsbD, PsbE, PsbF, PsbH, PsbI, PsbJ, PsbK, PsbL, PsbM, PsbT, PsbX, PsbY, PsbZ, Psb30/Ycf12, peripheral proteins PsbO, CyanoQ (PsbQ), PsbU, PsbV and a large number of cofactors. It forms dimeric complexes.

The protein resides in the cellular thylakoid membrane. Functionally, one of the extrinsic, lumenal subunits of photosystem II (PSII). PSII is a light-driven water plastoquinone oxidoreductase, using light energy to abstract electrons from H(2)O, generating a proton gradient subsequently used for ATP formation. The extrinsic proteins stabilize the structure of photosystem II oxygen-evolving complex (OEC), the ion environment of oxygen evolution and protect the OEC against heat-induced inactivation. This Synechococcus elongatus (strain ATCC 33912 / PCC 7942 / FACHB-805) (Anacystis nidulans R2) protein is Photosystem II extrinsic protein U.